We begin with the raw amino-acid sequence, 314 residues long: Flotillin-like protein FloA (314 aa).

Residues 4–24 (IGPIIIAVLIIIFLIVFFTLV) form a helical membrane-spanning segment.

It belongs to the flotillin-like FloA family. In terms of assembly, homooligomerizes.

It localises to the cell membrane. It is found in the membrane raft. Its function is as follows. Found in functional membrane microdomains (FMM) that may be equivalent to eukaryotic membrane rafts. FMMs are highly dynamic and increase in number as cells age. Flotillins are thought to be important factors in membrane fluidity. The chain is Flotillin-like protein FloA from Listeria innocua serovar 6a (strain ATCC BAA-680 / CLIP 11262).